The chain runs to 58 residues: uncharacterized protein (58 aa).

The next 2 membrane-spanning stretches (helical) occupy residues 7 to 27 (IFDI…VAKT) and 29 to 49 (YGTG…AYKI).

It is found in the cell membrane. This is an uncharacterized protein from Bacillus subtilis (strain 168).